The primary structure comprises 180 residues: Protein PHLOEM PROTEIN 2-LIKE A9 (180 aa).

Residues 1 to 21 form a disordered region; the sequence is MSSQKSSHHKADSKMEQDNNR. Residues 9-21 show a composition bias toward basic and acidic residues; the sequence is HKADSKMEQDNNR.

In Arabidopsis thaliana (Mouse-ear cress), this protein is Protein PHLOEM PROTEIN 2-LIKE A9 (PP2A9).